Consider the following 132-residue polypeptide: Small ribosomal subunit protein uS8 (132 aa).

It belongs to the universal ribosomal protein uS8 family. In terms of assembly, part of the 30S ribosomal subunit. Contacts proteins S5 and S12.

One of the primary rRNA binding proteins, it binds directly to 16S rRNA central domain where it helps coordinate assembly of the platform of the 30S subunit. This chain is Small ribosomal subunit protein uS8, found in Pediococcus pentosaceus (strain ATCC 25745 / CCUG 21536 / LMG 10740 / 183-1w).